Here is a 356-residue protein sequence, read N- to C-terminus: ADP-ribosylhydrolase ARH3 (356 aa).

D26, E33, T62, D63, and D64 together coordinate Mg(2+). D63 is a binding site for substrate. Substrate-binding positions include 132–138 (KGSYGNG), H168, and I260. D303, D305, and T306 together coordinate Mg(2+).

Belongs to the ADP-ribosylglycohydrolase family. As to quaternary structure, monomer. Requires Mg(2+) as cofactor. It depends on Mn(2+) as a cofactor.

The protein resides in the nucleus. Its subcellular location is the cytoplasm. It localises to the chromosome. The protein localises to the mitochondrion matrix. It catalyses the reaction [(1''-&gt;2')-ADP-alpha-D-ribose](n) + H2O = [(1''-&gt;2')-ADP-alpha-D-ribose](n-1) + ADP-D-ribose. The enzyme catalyses 1''-O-acetyl-ADP-alpha-D-ribose + H2O = ADP-D-ribose + acetate + H(+). The catalysed reaction is O-(ADP-D-ribosyl)-L-seryl-[protein] + H2O = ADP-D-ribose + L-seryl-[protein]. It carries out the reaction alpha-NAD(+) + H2O = ADP-D-ribose + nicotinamide + H(+). The protein undergoes a dramatic conformational switch from closed to open states upon substrate-binding, which enables specific substrate recognition for the 1''-O-linkage. The glutamate flap (Glu-33) blocks substrate entrance to Mg(2+) in the unliganded closed state. In presence of substrate, Glu-33 is ejected from the active site: this closed-to-open transition significantly widens the substrate-binding channel and precisely positions the scissile 1''-O-linkage for cleavage while securing tightly 2'- and 3'-hydroxyls of ADP-ribose. Activity is inhibited by calcium. Its function is as follows. ADP-ribosylhydrolase that preferentially hydrolyzes the scissile alpha-O-linkage attached to the anomeric C1'' position of ADP-ribose and acts on different substrates, such as proteins ADP-ribosylated on serine and threonine, free poly(ADP-ribose) and O-acetyl-ADP-D-ribose. Specifically acts as a serine mono-ADP-ribosylhydrolase by mediating the removal of mono-ADP-ribose attached to serine residues on proteins, thereby playing a key role in DNA damage response. Serine ADP-ribosylation of proteins constitutes the primary form of ADP-ribosylation of proteins in response to DNA damage. Does not hydrolyze ADP-ribosyl-arginine, -cysteine, -diphthamide, or -asparagine bonds. Also able to degrade protein free poly(ADP-ribose), which is synthesized in response to DNA damage: free poly(ADP-ribose) acts as a potent cell death signal and its degradation by ADPRHL2 protects cells from poly(ADP-ribose)-dependent cell death, a process named parthanatos. Also hydrolyzes free poly(ADP-ribose) in mitochondria. Specifically digests O-acetyl-ADP-D-ribose, a product of deacetylation reactions catalyzed by sirtuins. Specifically degrades 1''-O-acetyl-ADP-D-ribose isomer, rather than 2''-O-acetyl-ADP-D-ribose or 3''-O-acetyl-ADP-D-ribose isomers. The protein is ADP-ribosylhydrolase ARH3 (adprs) of Latimeria chalumnae (Coelacanth).